A 159-amino-acid chain; its full sequence is Putative RING-H2 finger protein ATL69 (159 aa).

Residues 13 to 33 (LGYGIAIAVSILVLISFIMLA) traverse the membrane as a helical segment. The segment at 94-136 (CSICLCDYEAREPVRCIPECNHCFHTDCVDEWLRTSATCPLCR) adopts an RING-type; atypical zinc-finger fold.

It belongs to the RING-type zinc finger family. ATL subfamily.

The protein localises to the membrane. It catalyses the reaction S-ubiquitinyl-[E2 ubiquitin-conjugating enzyme]-L-cysteine + [acceptor protein]-L-lysine = [E2 ubiquitin-conjugating enzyme]-L-cysteine + N(6)-ubiquitinyl-[acceptor protein]-L-lysine.. It functions in the pathway protein modification; protein ubiquitination. This chain is Putative RING-H2 finger protein ATL69 (ATL69), found in Arabidopsis thaliana (Mouse-ear cress).